We begin with the raw amino-acid sequence, 555 residues long: Urocanate hydratase (555 aa).

NAD(+) is bound by residues glycine 51 to glycine 52, glutamine 129, glycine 175 to glycine 177, glutamate 195, glutamine 262 to histidine 266, tyrosine 272 to leucine 273, and tyrosine 321. The active site involves cysteine 409. Glycine 491 contacts NAD(+).

It belongs to the urocanase family. It depends on NAD(+) as a cofactor.

It is found in the cytoplasm. The enzyme catalyses 4-imidazolone-5-propanoate = trans-urocanate + H2O. It participates in amino-acid degradation; L-histidine degradation into L-glutamate; N-formimidoyl-L-glutamate from L-histidine: step 2/3. Its function is as follows. Catalyzes the conversion of urocanate to 4-imidazolone-5-propionate. The sequence is that of Urocanate hydratase from Xanthomonas euvesicatoria pv. vesicatoria (strain 85-10) (Xanthomonas campestris pv. vesicatoria).